The following is a 208-amino-acid chain: Small ribosomal subunit protein uS4 (208 aa).

The segment at 30-49 is disordered; it reads KSALEKRPYPPGQHGQRRSK. The S4 RNA-binding domain occupies 98–161; the sequence is RRLDNVVYRM…KNNPQIQRSL (64 aa).

The protein belongs to the universal ribosomal protein uS4 family. Part of the 30S ribosomal subunit. Contacts protein S5. The interaction surface between S4 and S5 is involved in control of translational fidelity.

Functionally, one of the primary rRNA binding proteins, it binds directly to 16S rRNA where it nucleates assembly of the body of the 30S subunit. With S5 and S12 plays an important role in translational accuracy. The sequence is that of Small ribosomal subunit protein uS4 from Nitratiruptor sp. (strain SB155-2).